Reading from the N-terminus, the 322-residue chain is NADH-cytochrome b5 reductase 2 (322 aa).

The chain crosses the membrane as a helical span at residues 30-46 (LAPVYVAVGLAGLGVGL). Residues 71 to 176 (QGWVNLKLSD…KGPLPKYPWE (106 aa)) enclose the FAD-binding FR-type domain. Position 179 to 214 (179 to 214 (KHKHICLVAGGTGITPMYQLAREIFKNPEDKTKVTL)) interacts with FAD.

The protein belongs to the flavoprotein pyridine nucleotide cytochrome reductase family. Requires FAD as cofactor.

Its subcellular location is the mitochondrion outer membrane. It carries out the reaction 2 Fe(III)-[cytochrome b5] + NADH = 2 Fe(II)-[cytochrome b5] + NAD(+) + H(+). Functionally, may mediate the reduction of outer membrane cytochrome b5. In Emericella nidulans (strain FGSC A4 / ATCC 38163 / CBS 112.46 / NRRL 194 / M139) (Aspergillus nidulans), this protein is NADH-cytochrome b5 reductase 2 (mcr1).